A 486-amino-acid polypeptide reads, in one-letter code: Malonate-semialdehyde dehydrogenase 2 (486 aa).

5 residues coordinate NAD(+): phenylalanine 154, lysine 178, glutamate 181, arginine 182, and serine 231. Catalysis depends on cysteine 286, which acts as the Nucleophile. Glutamate 386 is an NAD(+) binding site.

It belongs to the aldehyde dehydrogenase family. IolA subfamily. In terms of assembly, homotetramer.

It catalyses the reaction 3-oxopropanoate + NAD(+) + CoA + H2O = hydrogencarbonate + acetyl-CoA + NADH + H(+). It carries out the reaction 2-methyl-3-oxopropanoate + NAD(+) + CoA + H2O = propanoyl-CoA + hydrogencarbonate + NADH + H(+). It participates in polyol metabolism; myo-inositol degradation into acetyl-CoA; acetyl-CoA from myo-inositol: step 7/7. In terms of biological role, catalyzes the oxidation of malonate semialdehyde (MSA) and methylmalonate semialdehyde (MMSA) into acetyl-CoA and propanoyl-CoA, respectively. Is involved in a myo-inositol catabolic pathway. Bicarbonate, and not CO2, is the end-product of the enzymatic reaction. This is Malonate-semialdehyde dehydrogenase 2 from Oceanobacillus iheyensis (strain DSM 14371 / CIP 107618 / JCM 11309 / KCTC 3954 / HTE831).